Here is a 73-residue protein sequence, read N- to C-terminus: Large ribosomal subunit protein uL24 (73 aa).

The span at 51–65 (DDNPKGGFIHKEKPM) shows a compositional bias: basic and acidic residues. Residues 51 to 73 (DDNPKGGFIHKEKPMHISNVKKA) are disordered.

The protein belongs to the universal ribosomal protein uL24 family. In terms of assembly, part of the 50S ribosomal subunit.

In terms of biological role, one of two assembly initiator proteins, it binds directly to the 5'-end of the 23S rRNA, where it nucleates assembly of the 50S subunit. One of the proteins that surrounds the polypeptide exit tunnel on the outside of the subunit. The protein is Large ribosomal subunit protein uL24 of Helicobacter pylori (strain Shi470).